Reading from the N-terminus, the 426-residue chain is Probable alpha-galactosidase B (426 aa).

A signal peptide spans 1–13; it reads MSRSKTRQGKLPA. 2 cysteine pairs are disulfide-bonded: cysteine 24-cysteine 56 and cysteine 106-cysteine 136. The active-site Nucleophile is the aspartate 134. Residues asparagine 141 and asparagine 159 are each glycosylated (N-linked (GlcNAc...) asparagine). 204–208 lines the substrate pocket; that stretch reads EWGQA. Asparagine 215 carries N-linked (GlcNAc...) asparagine glycosylation. Aspartate 226 serves as the catalytic Proton donor. Asparagine 265 carries an N-linked (GlcNAc...) asparagine glycan.

It belongs to the glycosyl hydrolase 27 family.

Its subcellular location is the secreted. The enzyme catalyses Hydrolysis of terminal, non-reducing alpha-D-galactose residues in alpha-D-galactosides, including galactose oligosaccharides, galactomannans and galactolipids.. Hydrolyzes a variety of simple alpha-D-galactoside as well as more complex molecules such as oligosaccharides and polysaccharides. This is Probable alpha-galactosidase B (aglB) from Aspergillus fumigatus (strain CBS 144.89 / FGSC A1163 / CEA10) (Neosartorya fumigata).